A 150-amino-acid chain; its full sequence is Flagellar basal-body rod protein FlgC (150 aa).

The protein belongs to the flagella basal body rod proteins family. As to quaternary structure, the basal body constitutes a major portion of the flagellar organelle and consists of four rings (L,P,S, and M) mounted on a central rod. The rod consists of about 26 subunits of FlgG in the distal portion, and FlgB, FlgC and FlgF are thought to build up the proximal portion of the rod with about 6 subunits each.

It is found in the bacterial flagellum basal body. In Bacillus subtilis (strain 168), this protein is Flagellar basal-body rod protein FlgC (flgC).